A 266-amino-acid chain; its full sequence is Translation initiation factor 2 subunit alpha (266 aa).

An S1 motif domain is found at 12–83 (GEILIATVKQ…RKGTVDVSLK (72 aa)).

This sequence belongs to the eIF-2-alpha family. Heterotrimer composed of an alpha, a beta and a gamma chain.

EIF-2 functions in the early steps of protein synthesis by forming a ternary complex with GTP and initiator tRNA. The protein is Translation initiation factor 2 subunit alpha of Saccharolobus solfataricus (strain ATCC 35092 / DSM 1617 / JCM 11322 / P2) (Sulfolobus solfataricus).